A 153-amino-acid chain; its full sequence is Large ribosomal subunit protein uL30 (153 aa).

The protein belongs to the universal ribosomal protein uL30 family. As to quaternary structure, part of the 50S ribosomal subunit.

This Methanocorpusculum labreanum (strain ATCC 43576 / DSM 4855 / Z) protein is Large ribosomal subunit protein uL30.